Reading from the N-terminus, the 115-residue chain is UPF0597 protein HI_0855 (115 aa).

Belongs to the UPF0597 family.

The chain is UPF0597 protein HI_0855 from Haemophilus influenzae (strain ATCC 51907 / DSM 11121 / KW20 / Rd).